Consider the following 497-residue polypeptide: C4-dicarboxylate transport protein (497 aa).

Transmembrane regions (helical) follow at residues L27–Y45, I60–M82, A95–V117, I168–V185, R205–G227, L237–V259, I348–I370, and A374–I393. The disordered stretch occupies residues A466–L497. The span at G475–P484 shows a compositional bias: basic and acidic residues.

This sequence belongs to the dicarboxylate/amino acid:cation symporter (DAACS) (TC 2.A.23) family.

Its subcellular location is the cell inner membrane. In terms of biological role, responsible for the transport of dicarboxylates such as succinate, fumarate, and malate from the periplasm across the inner membrane. This transport system plays an essential role in the energy supply of tropical rhizobium-legume symbionts. This chain is C4-dicarboxylate transport protein (dctA1), found in Sinorhizobium fredii (strain NBRC 101917 / NGR234).